The chain runs to 875 residues: Metal transporter CNNM2 (875 aa).

Over 1–250 (MIGCGACEPE…TKMIVGEEKK (250 aa)) the chain is Extracellular. Residue Asn112 is glycosylated (N-linked (GlcNAc...) asparagine). A disordered region spans residues 122–148 (EHERRRHTPGERGLGGPAPPEPDSGPQ). Residues 251–271 (FLLPFWLQVIFISLLLCLSGM) traverse the membrane as a helical segment. Residues 251–431 (FLLPFWLQVI…DPYNDLVKEE (181 aa)) enclose the CNNM transmembrane domain. Topologically, residues 272-313 (FSGLNLGLMALDPMELRIVQNCGTEKEKNYAKRIEPVRRQGN) are cytoplasmic. An intramembrane region (helical) is located at residues 314-334 (YLLCSLLLGNVLVNTTLTILL). At 335–338 (DDIA) the chain is on the cytoplasmic side. The helical transmembrane segment at 339–359 (GSGLVAVVVSTIGIVIFGEIV) threads the bilayer. At 360 to 368 (PQAICSRHG) the chain is on the extracellular side. The helical transmembrane segment at 369–389 (LAVGANTIFLTKFFMMMTFPA) threads the bilayer. Residues 390 to 875 (SYPVSKLLDC…NHSLHSEGAI (486 aa)) are Cytoplasmic-facing. 2 CBS domains span residues 450–511 (MTPL…CTPL) and 518–584 (YNHP…ILDE). Positions 741-763 (AGSPGENKSPPRPCGLNHSDSLS) are disordered. A Phosphoserine modification is found at Ser761.

The protein belongs to the ACDP family.

The protein resides in the cell membrane. Divalent metal cation transporter. Mediates transport of divalent metal cations in an order of Mg(2+) &gt; Co(2+) &gt; Mn(2+) &gt; Sr(2+) &gt; Ba(2+) &gt; Cu(2+) &gt; Fe(2+). The protein is Metal transporter CNNM2 (Cnnm2) of Rattus norvegicus (Rat).